The primary structure comprises 589 residues: Kelch-like protein 25 (589 aa).

The region spanning 46–114 is the BTB domain; sequence TDVTLWAGNR…AYSSKIIINE (69 aa). One can recognise a BACK domain in the interval 149 to 250; it reads CLGMMILSDA…LPSELLKEAV (102 aa). 6 Kelch repeats span residues 296–340, 341–388, 389–444, 446–492, 493–538, and 539–585; these read TLLI…AIGC, KVYV…ELEN, CLYV…SAKL, LFAF…VLGS, QIFI…ASGN, and KVYV…STWK.

In terms of assembly, component of the BCR(KLHL25) E3 ubiquitin ligase complex, at least composed of cul3, klhl25 and rbx1.

It participates in protein modification; protein ubiquitination. Its function is as follows. Substrate-specific adapter of a BCR (BTB-CUL3-RBX1) E3 ubiquitin ligase complex involved in various processes, such as translation homeostasis and lipid synthesis. The BCR(KLHL25) ubiquitin ligase complex acts by mediating ubiquitination of hypophosphorylated eif4ebp1 (4E-BP1): ubiquitination and subsequent degradation of hypophosphorylated EIF4EBP1 (4E-BP1) probably serves as a homeostatic mechanism to maintain translation and prevent eIF4E inhibition when eIF4E levels are low. The BCR(KLHL25) complex also acts as a regulator of lipid synthesis by mediating ubiquitination and degradation of ACLY, thereby inhibiting lipid synthesis. The polypeptide is Kelch-like protein 25 (Xenopus tropicalis (Western clawed frog)).